The chain runs to 319 residues: Selection and upkeep of intraepithelial T-cells protein 9 (319 aa).

A signal peptide spans 1-26 (MESSASCLPGFFMSFLLLQNTVLTQA). Positions 27 to 117 (MRSDIKINIQ…TNQEKKRSIV (91 aa)) constitute an Ig-like V-type domain. Over 27 to 139 (MRSDIKINIQ…LMSNKFSCPS (113 aa)) the chain is Extracellular. An intrachain disulfide couples C47 to C101. N-linked (GlcNAc...) asparagine glycosylation occurs at N105. The helical transmembrane segment at 140–160 (IYLITIIFLNFLRGILVFCCL) threads the bilayer. Residues 161 to 183 (RRKPVCFRNLMSTVMEALYSKMG) lie on the Cytoplasmic side of the membrane. A helical transmembrane segment spans residues 184–204 (VCCLLIWECLLLVLYIAFLPI). Residues 205-228 (YVSFRSRAFLLDDTYPLYTNWLWN) are Extracellular-facing. Residues 229–249 (ICIILTVIMVLFPGLILCLLW) traverse the membrane as a helical segment. Residues 250–319 (TLNCYGQVSS…DDTASTLFIS (70 aa)) lie on the Cytoplasmic side of the membrane.

Belongs to the SKINT family. Expressed in skin, thymus and testis.

Its subcellular location is the membrane. May act by engaging a cell surface molecule on immature T-cells in the embryonic thymus. The sequence is that of Selection and upkeep of intraepithelial T-cells protein 9 (Skint9) from Mus musculus (Mouse).